Reading from the N-terminus, the 253-residue chain is Acidic endochitinase pcht28 (253 aa).

Residues 1 to 24 form the signal peptide; that stretch reads MKFNIVSPVALSCLFFLFLTGTLA. Glu92 functions as the Proton donor in the catalytic mechanism. Cys212 and Cys244 are disulfide-bonded.

This sequence belongs to the glycosyl hydrolase 19 family. Chitinase class II subfamily.

Its subcellular location is the secreted. It is found in the extracellular space. The enzyme catalyses Random endo-hydrolysis of N-acetyl-beta-D-glucosaminide (1-&gt;4)-beta-linkages in chitin and chitodextrins.. Defense against chitin-containing fungal pathogens. The sequence is that of Acidic endochitinase pcht28 from Solanum chilense (Tomato).